The following is a 316-amino-acid chain: Protoheme IX farnesyltransferase (316 aa).

8 helical membrane-spanning segments follow: residues 35 to 55 (VMVLVIFTALVGMVVSQGHVQ), 56 to 76 (PAIGAISLLAIAVGAGASGCL), 119 to 139 (VVLGLAANLLAAALLAFTIVF), 156 to 176 (IVIGGAAGALPPVIGQAVVTG), 183 to 203 (LILFAIIFIWTPPHFWALALI), 229 to 246 (IVWYSLLLAPLGLVPVAL), 250 to 272 (GLVYAVVGLVGGLGMVAFSIRVL), and 283 to 303 (AAMGMFGFSILYLFALFSALL).

The protein belongs to the UbiA prenyltransferase family. Protoheme IX farnesyltransferase subfamily.

It localises to the cell inner membrane. The catalysed reaction is heme b + (2E,6E)-farnesyl diphosphate + H2O = Fe(II)-heme o + diphosphate. It participates in porphyrin-containing compound metabolism; heme O biosynthesis; heme O from protoheme: step 1/1. Converts heme B (protoheme IX) to heme O by substitution of the vinyl group on carbon 2 of heme B porphyrin ring with a hydroxyethyl farnesyl side group. In Methylobacterium radiotolerans (strain ATCC 27329 / DSM 1819 / JCM 2831 / NBRC 15690 / NCIMB 10815 / 0-1), this protein is Protoheme IX farnesyltransferase.